Reading from the N-terminus, the 570-residue chain is MASLVYGTPWLRVRSLPELAPAFLRRRQSSLFYCSRRSFAVVACSTPVNNGGSVRVRFAPSPTGNLHVGGARTALFNYLFARSKGGKFVLRIEDTDLERSTRESEAAVLQDLSWLGLDWDEGPGVSGDFGPYRQSERNALYKQYAEKLLESGHVYRCFCSSEELVKMKENAKLKQLPPVYTGKWATASDAEIEQELEKGTPFTYRFRVPKEGSLKINDLIRGEVCWNLDTLGDFVVMRSNGQPVYNFCVTVDDATMAISHVIRAEEHLPNTLRQALIYKALKFPMPQFAHVSLILAPDRSKLSKRHGATSVGQYREMGYLPQGMVNYLALLGWGDGTENEFFTLEDLVEKFSIERVNKSGAIFDSTKLRWMNGQHLRALPNEKLTKLVGERWKSAGILTESEGSFVNEAVELLKDGIELVTDSDKVLLNLLSYPLHATLASPEAKPAVEDKLHEVAASLIAAYDSGEIPSALEEGQGAWQKWVKAFGKSLKRKGKSLFMPLRVLLTGKLHGPEMGTSIVLIYKAGSPGIVVPQAGFVSMEERFKILREIDWEALNKDESVPLESTATVST.

Residues 1 to 39 (MASLVYGTPWLRVRSLPELAPAFLRRRQSSLFYCSRRSF) constitute a chloroplast and mitochondrion transit peptide. Residue 57–59 (RFA) coordinates L-glutamate. The 'HIGH' region motif lies at 60–70 (PSPTGNLHVGG). His67 lines the ATP pocket. Residues Glu93, 245–249 (YNFCV), and Arg263 each bind L-glutamate. ATP-binding positions include Glu266 and 301–305 (KLSKR). The 'KMSKS' region signature appears at 301–305 (KLSKR).

The protein belongs to the class-I aminoacyl-tRNA synthetase family. Glutamate--tRNA ligase type 1 subfamily.

The protein resides in the plastid. It is found in the chloroplast. Its subcellular location is the mitochondrion. It carries out the reaction tRNA(Glu) + L-glutamate + ATP = L-glutamyl-tRNA(Glu) + AMP + diphosphate. Catalyzes the attachment of glutamate to tRNA(Glu) in a two-step reaction: glutamate is first activated by ATP to form Glu-AMP and then transferred to the acceptor end of tRNA(Glu). This Arabidopsis thaliana (Mouse-ear cress) protein is Glutamate--tRNA ligase, chloroplastic/mitochondrial.